The primary structure comprises 183 residues: Dual-action ribosomal maturation protein DarP (183 aa).

The protein belongs to the DarP family.

It localises to the cytoplasm. Its function is as follows. Member of a network of 50S ribosomal subunit biogenesis factors which assembles along the 30S-50S interface, preventing incorrect 23S rRNA structures from forming. Promotes peptidyl transferase center (PTC) maturation. The sequence is that of Dual-action ribosomal maturation protein DarP from Escherichia coli O81 (strain ED1a).